We begin with the raw amino-acid sequence, 419 residues long: MQVLILGSGVVGVTSAYYLATQGHEVTVVDRREAPAMETSYGNAGQVSFGFSSPWAAPGIPRKALKWMFQEHAPLKIQPKRDPAMARFMMAMFNNCTPERYAVNKERMVRVAEYSRQCIDALRRDTGIRYEDRQRGLLQLFRHESQVEAAGKDMRVLSECGVRHRLLGAEELVTAEPALARVPGKFVGGLHLPDDQTGDCHLFTQRLAEHCREHLGVTFRFGVDVQRIERQAGRVERVVTSAGSLRADAYVVCLGSFSPLLVKDLDIRLPIYPVKGYSLTLPVTDDGGAPQSTVMDETFKVAISRFDDRIRVGGTAELASYDLSLLEKRRATISMVVRDVFPEGGDAAKAEFWTGLRPMTPDSTPIIGATRYDNLWLNTGHGTLGWTMSCGSAHLLADLMAGRRPAIDPIGLDVSRYAA.

Residue 3–17 coordinates FAD; it reads VLILGSGVVGVTSAY.

This sequence belongs to the DadA oxidoreductase family. Requires FAD as cofactor.

It catalyses the reaction a D-alpha-amino acid + A + H2O = a 2-oxocarboxylate + AH2 + NH4(+). Its pathway is amino-acid degradation; D-alanine degradation; NH(3) and pyruvate from D-alanine: step 1/1. Functionally, oxidative deamination of D-amino acids. This chain is D-amino acid dehydrogenase, found in Chromohalobacter salexigens (strain ATCC BAA-138 / DSM 3043 / CIP 106854 / NCIMB 13768 / 1H11).